Here is a 285-residue protein sequence, read N- to C-terminus: 1,4-dihydroxy-2-naphthoyl-CoA synthase (285 aa).

Substrate is bound by residues arginine 45, 84–88, tyrosine 97, 129–133, threonine 155, serine 161, tyrosine 258, and lysine 273; these read SGGDQ and YAIGG. 154–156 contributes to the hydrogencarbonate binding site; that stretch reads QTG.

It belongs to the enoyl-CoA hydratase/isomerase family. MenB subfamily. It depends on hydrogencarbonate as a cofactor.

The enzyme catalyses 2-succinylbenzoyl-CoA + H(+) = 1,4-dihydroxy-2-naphthoyl-CoA + H2O. It participates in quinol/quinone metabolism; 1,4-dihydroxy-2-naphthoate biosynthesis; 1,4-dihydroxy-2-naphthoate from chorismate: step 6/7. The protein operates within quinol/quinone metabolism; menaquinone biosynthesis. In terms of biological role, converts o-succinylbenzoyl-CoA (OSB-CoA) to 1,4-dihydroxy-2-naphthoyl-CoA (DHNA-CoA). This chain is 1,4-dihydroxy-2-naphthoyl-CoA synthase, found in Haemophilus influenzae (strain ATCC 51907 / DSM 11121 / KW20 / Rd).